The sequence spans 227 residues: MELVFIRHGFSEWNAKNLFTGWRDVNLTERGIEEAKAAGKKLLEAGYEFDIAFTSVLTRAIKTCNIVLEESNQLWIPQVKHWRLNERHYGALQGLDKKATAEQYGDEQVHIWRRSYDVSPPDLDPQDPNSAHNDRRYALLPKDVVPNAENLKITLERVLPFWEDQIAPALLSGKRVLVTAHGNSLRALAKHIIGISDEEIMAFEIPTGQPLVLKLDEQLNFVEKFYL.

Substrate is bound by residues 7-14, 20-21, Arg-59, 86-89, Lys-97, 113-114, and 182-183; these read RHGFSEWN, TG, ERHY, RR, and GN. Residue His-8 is the Tele-phosphohistidine intermediate of the active site. Catalysis depends on Glu-86, which acts as the Proton donor/acceptor.

This sequence belongs to the phosphoglycerate mutase family. BPG-dependent PGAM subfamily. In terms of assembly, homodimer.

It catalyses the reaction (2R)-2-phosphoglycerate = (2R)-3-phosphoglycerate. The protein operates within carbohydrate degradation; glycolysis; pyruvate from D-glyceraldehyde 3-phosphate: step 3/5. Catalyzes the interconversion of 2-phosphoglycerate and 3-phosphoglycerate. The chain is 2,3-bisphosphoglycerate-dependent phosphoglycerate mutase from Histophilus somni (strain 129Pt) (Haemophilus somnus).